A 339-amino-acid chain; its full sequence is Transcription initiation factor IIB (339 aa).

A TFIIB-type zinc finger spans residues 39 to 70 (EELICPVCGSKNIIKDYERAEIVCEMCGCVLQ). Residues Cys43, Cys46, Cys62, and Cys65 each contribute to the Zn(2+) site. Repeat copies occupy residues 156-239 (SELD…SREL) and 250-331 (DYVP…ELTE).

It belongs to the TFIIB family.

Functionally, stabilizes TBP binding to an archaeal box-A promoter. Also responsible for recruiting RNA polymerase II to the pre-initiation complex (DNA-TBP-TFIIB). The chain is Transcription initiation factor IIB from Methanococcus maripaludis (strain C7 / ATCC BAA-1331).